The following is a 357-amino-acid chain: Probable glutamine amidotransferase DUG3 (357 aa).

Residue Cys-2 is the For GATase activity of the active site. Residues 2–260 form the Glutamine amidotransferase type-2 domain; the sequence is CRFLIFKGKQ…PGEYRVERLD (259 aa).

This sequence belongs to the DUG3 family. In terms of assembly, component of the GSH degradosomal complex composed of at least DUG1, DUG2 and DUG3.

The protein localises to the cytoplasm. In terms of biological role, component of the GSH degradosomal complex involved in the degradation of glutathione (GSH) and other peptides containing a gamma-glu-X bond. The sequence is that of Probable glutamine amidotransferase DUG3 (DUG3) from Saccharomyces cerevisiae (strain ATCC 204508 / S288c) (Baker's yeast).